The following is an 84-amino-acid chain: Delta-stichotoxin-Sgt3a (84 aa).

Residues 1-19 form the signal peptide; that stretch reads MAYLKIVLVALMLVVAVSA. Residues 20–33 constitute a propeptide that is removed on maturation; it reads MRLSDQEDQDISVA. Cystine bridges form between cysteine 38-cysteine 78, cysteine 40-cysteine 68, and cysteine 61-cysteine 79. Residue glycine 84 is a propeptide.

Belongs to the sea anemone sodium channel inhibitory toxin family. Type II subfamily.

Its subcellular location is the secreted. It is found in the nematocyst. Functionally, binds specifically to voltage-gated sodium channels (Nav), thereby delaying their inactivation during signal transduction. This is Delta-stichotoxin-Sgt3a from Stichodactyla gigantea (Giant carpet anemone).